The chain runs to 496 residues: MKKYILSLDQGTTSSRAILFNKKGEIVHSAQKEFTQHFPKPGWVEHNAQEIWGSILAVIATCLSEADVKPEQIAGIGITNQRETAVVWDKTTGKPIYNAIVWQSRQTAEICDELKEKGYSEMVREKTGLLIDAYFSGTKVKWILDNVEGAREKAENGDLLFGTIDTWLVWKLSGGKAHVTDYSNASRTLMFNIHDLQWDDELLDMLTVPKSMLPEVRPSSEVYGETIDYHFFGQNVPIAGVAGDQQAALFGQACFGEGMAKNTYGTGCFMLMNTGEKAVASEHGLLTTIAWGIDGKVNYALEGSIFVAGSAIQWLRDGMRMFKDASESEVYASRVESTDGVYVVPAFVGLGTPYWDSEVRGAMFGVTRGTTKEHFIRATLESLAYQIKDVLCAMEADSGIELKTLRVDGGAVKNNFLMKFQSDILDVPVERPVINETTALGAAYLAGLAVGYWKNQDEIKEQWHMDKRFEPTMEAETSEELYAGWKKAIEATKAFK.

Position 12 (threonine 12) interacts with ADP. ATP-binding residues include threonine 12, threonine 13, and serine 14. Sn-glycerol 3-phosphate is bound at residue threonine 12. Arginine 16 contacts ADP. Sn-glycerol 3-phosphate-binding residues include arginine 82, glutamate 83, and tyrosine 134. The glycerol site is built by arginine 82, glutamate 83, and tyrosine 134. Phosphohistidine; by HPr is present on histidine 230. Aspartate 244 provides a ligand contact to sn-glycerol 3-phosphate. Residues aspartate 244 and glutamine 245 each coordinate glycerol. Residues threonine 266 and glycine 309 each contribute to the ADP site. Residues threonine 266, glycine 309, glutamine 313, and glycine 410 each contribute to the ATP site. ADP is bound by residues glycine 410 and asparagine 414.

This sequence belongs to the FGGY kinase family. Homotetramer and homodimer (in equilibrium). Post-translationally, the phosphoenolpyruvate-dependent sugar phosphotransferase system (PTS), including enzyme I, and histidine-containing protein (HPr) are required for the phosphorylation, which leads to the activation of the enzyme.

The catalysed reaction is glycerol + ATP = sn-glycerol 3-phosphate + ADP + H(+). It participates in polyol metabolism; glycerol degradation via glycerol kinase pathway; sn-glycerol 3-phosphate from glycerol: step 1/1. Its activity is regulated as follows. Activated by phosphorylation and inhibited by fructose 1,6-bisphosphate (FBP). Functionally, key enzyme in the regulation of glycerol uptake and metabolism. Catalyzes the phosphorylation of glycerol to yield sn-glycerol 3-phosphate. The chain is Glycerol kinase from Bacillus anthracis (strain A0248).